Consider the following 278-residue polypeptide: Probable endonuclease 4 (278 aa).

Zn(2+) is bound by residues H66, H106, E140, D172, H175, H209, D222, H224, and E254.

Belongs to the AP endonuclease 2 family. Zn(2+) serves as cofactor.

The enzyme catalyses Endonucleolytic cleavage to 5'-phosphooligonucleotide end-products.. In terms of biological role, endonuclease IV plays a role in DNA repair. It cleaves phosphodiester bonds at apurinic or apyrimidinic (AP) sites, generating a 3'-hydroxyl group and a 5'-terminal sugar phosphate. This Haloquadratum walsbyi (strain DSM 16790 / HBSQ001) protein is Probable endonuclease 4.